Reading from the N-terminus, the 149-residue chain is Immunoglobulin kappa chain variable 6-17 (149 aa).

The N-terminal stretch at 1-29 is a signal peptide; that stretch reads MHHTSMGIKMESQIQVFVFVFLWLSGVDG. Repeats lie at residues 26–35 and 38–47; these read GVDGDIVMTQ. The framework-1 stretch occupies residues 42–64; the sequence is DIVMTQSHKFMSTSVGDRVSITC. A complementarity-determining-1 region spans residues 65–75; the sequence is KASQDVSTTVA. The interval 76–90 is framework-2; the sequence is WYQQKPGQSPKLLIY. Positions 91 to 97 are complementarity-determining-2; it reads SASYRYT. Residues 98–129 form a framework-3 region; the sequence is GVPDRFTGSGSGTDFTFTISSVQAEDLAVYYC. A complementarity-determining-3 region spans residues 130 to 138; the sequence is QQHYSTPPT. Residues 139-148 form a framework-4 region; that stretch reads FGGGTKLEIK.

The polypeptide is Immunoglobulin kappa chain variable 6-17 (Mus musculus (Mouse)).